The primary structure comprises 137 residues: Protein yippee-like F37A8.5 (137 aa).

The disordered stretch occupies residues 1–20 (MHFRMKVLENSSKHNTPKKQ). One can recognise a Yippee domain in the interval 32–129 (RCYSCIHCRA…IELAHMVKDN (98 aa)). Zn(2+) is bound by residues Cys36, Cys39, Cys92, and Cys95.

Belongs to the yippee family.

In Caenorhabditis elegans, this protein is Protein yippee-like F37A8.5.